The following is a 718-amino-acid chain: Effector protein hopM1 (718 aa).

Residues methionine 1 to glycine 10 are compositionally biased toward gly residues. 2 disordered regions span residues methionine 1–proline 63 and glycine 683–arginine 718. Positions serine 11 to proline 22 are enriched in polar residues. Residues alanine 44–alanine 60 are compositionally biased toward low complexity.

Interacts with the chaperone ShcM.

The protein resides in the secreted. It localises to the host membrane. Its function is as follows. Involved in the suppression of basal resistance and promotion of disease symptoms in plants. May be involved in the inhibition of a host vesicle trafficking pathway. In Pseudomonas syringae pv. syringae (strain B728a), this protein is Effector protein hopM1 (hopM1).